A 652-amino-acid chain; its full sequence is O-fucosyltransferase 15 (652 aa).

The chain crosses the membrane as a helical; Signal-anchor for type II membrane protein span at residues 91–111 (TAAFVIVLVGFFIFVNWFMLS). 3 N-linked (GlcNAc...) asparagine glycosylation sites follow: Asn139, Asn169, and Asn251. Residue 426-428 (HLR) coordinates substrate. N-linked (GlcNAc...) asparagine glycosylation is found at Asn464, Asn546, and Asn607.

The protein belongs to the glycosyltransferase GT106 family.

It is found in the membrane. Its pathway is glycan metabolism. In Arabidopsis thaliana (Mouse-ear cress), this protein is O-fucosyltransferase 15.